The following is a 184-amino-acid chain: Interferon alpha-3 (184 aa).

An N-terminal signal peptide occupies residues 1–23 (MALPVSLLMALVVLSCHSSCSLG). 2 disulfides stabilise this stretch: Cys24–Cys122 and Cys52–Cys162.

It belongs to the alpha/beta interferon family.

The protein resides in the secreted. Its function is as follows. Produced by macrophages, IFN-alpha have antiviral activities. Interferon stimulates the production of two enzymes: a protein kinase and an oligoadenylate synthetase. This is Interferon alpha-3 from Equus caballus (Horse).